Reading from the N-terminus, the 127-residue chain is Aspartate 1-decarboxylase (127 aa).

S25 (schiff-base intermediate with substrate; via pyruvic acid) is an active-site residue. A Pyruvic acid (Ser) modification is found at S25. Residue T57 participates in substrate binding. Catalysis depends on Y58, which acts as the Proton donor. 73–75 (GAA) lines the substrate pocket.

It belongs to the PanD family. In terms of assembly, heterooctamer of four alpha and four beta subunits. Pyruvate serves as cofactor. Post-translationally, is synthesized initially as an inactive proenzyme, which is activated by self-cleavage at a specific serine bond to produce a beta-subunit with a hydroxyl group at its C-terminus and an alpha-subunit with a pyruvoyl group at its N-terminus.

It is found in the cytoplasm. The enzyme catalyses L-aspartate + H(+) = beta-alanine + CO2. Its pathway is cofactor biosynthesis; (R)-pantothenate biosynthesis; beta-alanine from L-aspartate: step 1/1. In terms of biological role, catalyzes the pyruvoyl-dependent decarboxylation of aspartate to produce beta-alanine. In Aliarcobacter butzleri (strain RM4018) (Arcobacter butzleri), this protein is Aspartate 1-decarboxylase.